We begin with the raw amino-acid sequence, 241 residues long: Ribosomal RNA small subunit methyltransferase G (241 aa).

Residues glycine 79, phenylalanine 84, 130-131 (AE), and arginine 150 each bind S-adenosyl-L-methionine.

Belongs to the methyltransferase superfamily. RNA methyltransferase RsmG family.

The protein localises to the cytoplasm. Its function is as follows. Specifically methylates the N7 position of a guanine in 16S rRNA. The polypeptide is Ribosomal RNA small subunit methyltransferase G (Limosilactobacillus reuteri (strain DSM 20016) (Lactobacillus reuteri)).